We begin with the raw amino-acid sequence, 313 residues long: B3 domain-containing transcription factor FUS3 (313 aa).

A DNA-binding region (TF-B3) is located at residues 92–194 (FQKELKNSDV…NYVIQARKAS (103 aa)).

As to quaternary structure, interacts with KIN10. In terms of processing, phosphorylation by KIN10 increases its stability. Phosphorylated at one or more of the Ser-55, Ser-56 and/or Ser-57 residues. Expressed in cotyledons and hypocotyls.

The protein resides in the nucleus. With respect to regulation, phosphorylation by KIN10 is required to positively regulates embryogenesis, seed yield, and plant growth at high temperature. Transcription regulator involved in gene regulation during late embryogenesis. Its expression to the epidermis is sufficient to control foliar organ identity by regulating positively the synthesis abscisic acid (ABA) and negatively gibberellin production. Negatively regulates TTG1 in the embryo. Positively regulates the abundance of the ABI3 protein in the seed. Cooperates with KIN10 to regulate developmental phase transitions and lateral organ development and act both as positive regulators of abscisic acid (ABA) signaling during germination. The polypeptide is B3 domain-containing transcription factor FUS3 (FUS3) (Arabidopsis thaliana (Mouse-ear cress)).